The primary structure comprises 946 residues: Bifunctional glutamine synthetase adenylyltransferase/adenylyl-removing enzyme (946 aa).

The interval 1-440 (MKPLSSPLQQ…VFNELIGDDE (440 aa)) is adenylyl removase. The adenylyl transferase stretch occupies residues 449-946 (SEQWRELWQD…ASWQKWLVEE (498 aa)).

The protein belongs to the GlnE family. The cofactor is Mg(2+).

It catalyses the reaction [glutamine synthetase]-O(4)-(5'-adenylyl)-L-tyrosine + phosphate = [glutamine synthetase]-L-tyrosine + ADP. The enzyme catalyses [glutamine synthetase]-L-tyrosine + ATP = [glutamine synthetase]-O(4)-(5'-adenylyl)-L-tyrosine + diphosphate. Involved in the regulation of glutamine synthetase GlnA, a key enzyme in the process to assimilate ammonia. When cellular nitrogen levels are high, the C-terminal adenylyl transferase (AT) inactivates GlnA by covalent transfer of an adenylyl group from ATP to specific tyrosine residue of GlnA, thus reducing its activity. Conversely, when nitrogen levels are low, the N-terminal adenylyl removase (AR) activates GlnA by removing the adenylyl group by phosphorolysis, increasing its activity. The regulatory region of GlnE binds the signal transduction protein PII (GlnB) which indicates the nitrogen status of the cell. The polypeptide is Bifunctional glutamine synthetase adenylyltransferase/adenylyl-removing enzyme (Escherichia coli (strain K12 / MC4100 / BW2952)).